The sequence spans 165 residues: Basic transcription factor 3 (165 aa).

The NAC-A/B domain maps to 33-97 (TTDDKRLQST…PQTKKLQDIL (65 aa)). Residues 120–134 (QKQASGEGNAASATI) show a composition bias toward polar residues. The disordered stretch occupies residues 120-144 (QKQASGEGNAASATIQEEDDDDVPE).

This sequence belongs to the NAC-beta family. In terms of assembly, part of the nascent polypeptide-associated complex (NAC). Interacts with EIF(ISO)4E.

This is Basic transcription factor 3 from Arabidopsis thaliana (Mouse-ear cress).